Consider the following 709-residue polypeptide: Polyribonucleotide nucleotidyltransferase (709 aa).

Asp-487 and Asp-493 together coordinate Mg(2+). A KH domain is found at 554–613 (PRIHTMKISSDKIKDVIGKGGAVIRALCEETGTTIEIEDDGTIKIAATEGAAAKEAIRRI). The S1 motif domain occupies 623–691 (GKIYTGKVMR…RQGRIRLSIK (69 aa)).

Belongs to the polyribonucleotide nucleotidyltransferase family. Component of the RNA degradosome, which is a multiprotein complex involved in RNA processing and mRNA degradation. Requires Mg(2+) as cofactor.

It is found in the cytoplasm. It catalyses the reaction RNA(n+1) + phosphate = RNA(n) + a ribonucleoside 5'-diphosphate. In terms of biological role, involved in mRNA degradation. Catalyzes the phosphorolysis of single-stranded polyribonucleotides processively in the 3'- to 5'-direction. In Aliivibrio fischeri (strain MJ11) (Vibrio fischeri), this protein is Polyribonucleotide nucleotidyltransferase.